We begin with the raw amino-acid sequence, 147 residues long: Large ribosomal subunit protein bL9 (147 aa).

It belongs to the bacterial ribosomal protein bL9 family.

Binds to the 23S rRNA. This is Large ribosomal subunit protein bL9 from Exiguobacterium sp. (strain ATCC BAA-1283 / AT1b).